The primary structure comprises 143 residues: ATP synthase F(0) complex subunit C2, mitochondrial (143 aa).

Residues Met1–Arg68 constitute a mitochondrion transit peptide. A helical membrane pass occupies residues Val84–Tyr104. Position 111 is an N6,N6,N6-trimethyllysine (Lys111). The chain crosses the membrane as a helical span at residues Ile119–Ile139.

The protein belongs to the ATPase C chain family. As to quaternary structure, F-type ATPases have 2 components, CF(1) - the catalytic core - and CF(0) - the membrane proton channel. CF(1) has five subunits: alpha(3), beta(3), gamma(1), delta(1), epsilon(1). CF(0) has three main subunits: a, b and c. Interacts with DNAJC30; interaction is direct. Post-translationally, trimethylated by ATPSCKMT at Lys-111. Methylation is required for proper incorporation of the C subunit into the ATP synthase complex and mitochondrial respiration.

The protein resides in the mitochondrion membrane. Its function is as follows. Mitochondrial membrane ATP synthase (F(1)F(0) ATP synthase or Complex V) produces ATP from ADP in the presence of a proton gradient across the membrane which is generated by electron transport complexes of the respiratory chain. F-type ATPases consist of two structural domains, F(1) - containing the extramembraneous catalytic core and F(0) - containing the membrane proton channel, linked together by a central stalk and a peripheral stalk. During catalysis, ATP synthesis in the catalytic domain of F(1) is coupled via a rotary mechanism of the central stalk subunits to proton translocation. Part of the complex F(0) domain. A homomeric c-ring of probably 10 subunits is part of the complex rotary element. The protein is ATP synthase F(0) complex subunit C2, mitochondrial of Ovis aries (Sheep).